Here is a 111-residue protein sequence, read N- to C-terminus: uncharacterized protein (111 aa).

It to M.tuberculosis Rv1271c.

This is an uncharacterized protein from Mycobacterium bovis (strain ATCC BAA-935 / AF2122/97).